Here is a 521-residue protein sequence, read N- to C-terminus: Medium/long-chain-fatty-acid--[acyl-carrier-protein] ligase MbtM (521 aa).

The protein belongs to the ATP-dependent AMP-binding enzyme family.

It carries out the reaction a long-chain fatty acid + holo-[ACP] + ATP = a long-chain fatty acyl-[ACP] + AMP + diphosphate. It catalyses the reaction a medium-chain fatty acid + holo-[ACP] + ATP = a medium-chain fatty acyl-[ACP] + AMP + diphosphate. It participates in siderophore biosynthesis; mycobactin biosynthesis. Its function is as follows. Activates lipidic moieties required for mycobactin biosynthesis. Converts medium- to long-chain aliphatic fatty acids into acyl adenylate, which is further transferred on to the phosphopantetheine arm of the carrier protein MbtL. The protein is Medium/long-chain-fatty-acid--[acyl-carrier-protein] ligase MbtM (mbtM) of Mycobacterium sp. (strain MCS).